A 262-amino-acid polypeptide reads, in one-letter code: Probable ketoamine kinase TTHA1179 (262 aa).

79-81 is a binding site for ATP; the sequence is AYL. D172 functions as the Proton acceptor in the catalytic mechanism.

Belongs to the fructosamine kinase family.

The catalysed reaction is N(6)-(D-ribulosyl)-L-lysine + ATP = N(6)-(3-O-phospho-D-ribulosyl)-L-lysine + ADP + H(+). The enzyme catalyses N(6)-(D-erythrulosyl)-L-lysine + ATP = N(6)-(3-O-phospho-D-erythrulosyl)-L-lysine + ADP + H(+). It carries out the reaction N(6)-D-ribulosyl-L-lysyl-[protein] + ATP = N(6)-(3-O-phospho-D-ribulosyl)-L-lysyl-[protein] + ADP + H(+). It catalyses the reaction N(6)-(D-erythrulosyl)-L-lysyl-[protein] + ATP = N(6)-(3-O-phospho-D-erythrulosyl)-L-lysyl-[protein] + ADP + H(+). Functionally, ketoamine kinase that phosphorylates ketoamines, such as erythruloselysine and ribuloselysine, on the third carbon of the sugar moiety to generate ketoamine 3-phosphate. Has higher activity on free lysine (erythruloselysine and ribuloselysine), than on ribuloselysine and erythruloselysine residues on glycated proteins. In Thermus thermophilus (strain ATCC 27634 / DSM 579 / HB8), this protein is Probable ketoamine kinase TTHA1179.